The primary structure comprises 202 residues: MPIGVPKVPFRNPGEEDAVWVDVYNRLHRERLLFLGQEVDSEISNQLIGLMVYLSIEDDTKDLYLFINSPGGWVIPGIAIYDTMQFVPPDIHTICMGLAASMGSFLLVGGEITKRLAFPHARVMIHQPASSFYEAQTGEFILEAEELLKLRETVTRVYVQRTGNPLWVVSEDMERDVFMSAIEAQAHGIVDLVAVENSGDLT.

Ser-101 serves as the catalytic Nucleophile. Residue His-126 is part of the active site.

The protein belongs to the peptidase S14 family. Component of the chloroplastic Clp protease core complex.

It is found in the plastid. It localises to the chloroplast stroma. It catalyses the reaction Hydrolysis of proteins to small peptides in the presence of ATP and magnesium. alpha-casein is the usual test substrate. In the absence of ATP, only oligopeptides shorter than five residues are hydrolyzed (such as succinyl-Leu-Tyr-|-NHMec, and Leu-Tyr-Leu-|-Tyr-Trp, in which cleavage of the -Tyr-|-Leu- and -Tyr-|-Trp bonds also occurs).. Functionally, cleaves peptides in various proteins in a process that requires ATP hydrolysis. Has a chymotrypsin-like activity. Plays a major role in the degradation of misfolded proteins. This Buxus microphylla (Littleleaf boxwood) protein is ATP-dependent Clp protease proteolytic subunit.